The chain runs to 451 residues: Chromosomal replication initiator protein DnaA (451 aa).

The domain I, interacts with DnaA modulators stretch occupies residues 1-77 (MTENEQIFWN…EVYNAQISVD (77 aa)). The domain II stretch occupies residues 77 to 110 (DYVFEEDLMIEQNQTKINQKPKQQALNSLPTVTS). The domain III, AAA+ region stretch occupies residues 111 to 329 (DLNPKYSFEN…GALKDISLVA (219 aa)). Residues G155, G157, K158, and T159 each coordinate ATP. Positions 330-451 (NFKQIDTITV…EIETIKNKIK (122 aa)) are domain IV, binds dsDNA.

Belongs to the DnaA family. In terms of assembly, oligomerizes as a right-handed, spiral filament on DNA at oriC.

The protein localises to the cytoplasm. Its function is as follows. Plays an essential role in the initiation and regulation of chromosomal replication. ATP-DnaA binds to the origin of replication (oriC) to initiate formation of the DNA replication initiation complex once per cell cycle. Binds the DnaA box (a 9 base pair repeat at the origin) and separates the double-stranded (ds)DNA. Forms a right-handed helical filament on oriC DNA; dsDNA binds to the exterior of the filament while single-stranded (ss)DNA is stabiized in the filament's interior. The ATP-DnaA-oriC complex binds and stabilizes one strand of the AT-rich DNA unwinding element (DUE), permitting loading of DNA polymerase. After initiation quickly degrades to an ADP-DnaA complex that is not apt for DNA replication. Binds acidic phospholipids. This Streptococcus pyogenes serotype M4 (strain MGAS10750) protein is Chromosomal replication initiator protein DnaA.